Reading from the N-terminus, the 451-residue chain is Probable carboxypeptidase PMAA_093910 (451 aa).

The first 19 residues, 1-19 (MKVSSLLPSVLLLVGATRA), serve as a signal peptide directing secretion. Asn-149 carries an N-linked (GlcNAc...) asparagine glycan. Residue Asp-171 coordinates Zn(2+). Glu-203 functions as the Proton acceptor in the catalytic mechanism. Glu-204 provides a ligand contact to Zn(2+). N-linked (GlcNAc...) asparagine glycosylation is present at Asn-354.

Belongs to the peptidase M20A family. It depends on Zn(2+) as a cofactor.

The protein localises to the secreted. This Talaromyces marneffei (strain ATCC 18224 / CBS 334.59 / QM 7333) (Penicillium marneffei) protein is Probable carboxypeptidase PMAA_093910.